The following is a 167-amino-acid chain: Crossover junction endodeoxyribonuclease RuvC (167 aa).

Catalysis depends on residues Asp-11, Glu-71, and Asp-143. Residues Asp-11, Glu-71, and Asp-143 each contribute to the Mg(2+) site.

Belongs to the RuvC family. As to quaternary structure, homodimer which binds Holliday junction (HJ) DNA. The HJ becomes 2-fold symmetrical on binding to RuvC with unstacked arms; it has a different conformation from HJ DNA in complex with RuvA. In the full resolvosome a probable DNA-RuvA(4)-RuvB(12)-RuvC(2) complex forms which resolves the HJ. Requires Mg(2+) as cofactor.

The protein resides in the cytoplasm. It carries out the reaction Endonucleolytic cleavage at a junction such as a reciprocal single-stranded crossover between two homologous DNA duplexes (Holliday junction).. The RuvA-RuvB-RuvC complex processes Holliday junction (HJ) DNA during genetic recombination and DNA repair. Endonuclease that resolves HJ intermediates. Cleaves cruciform DNA by making single-stranded nicks across the HJ at symmetrical positions within the homologous arms, yielding a 5'-phosphate and a 3'-hydroxyl group; requires a central core of homology in the junction. The consensus cleavage sequence is 5'-(A/T)TT(C/G)-3'. Cleavage occurs on the 3'-side of the TT dinucleotide at the point of strand exchange. HJ branch migration catalyzed by RuvA-RuvB allows RuvC to scan DNA until it finds its consensus sequence, where it cleaves and resolves the cruciform DNA. In Hyphomonas neptunium (strain ATCC 15444), this protein is Crossover junction endodeoxyribonuclease RuvC.